The following is a 407-amino-acid chain: Naringenin 8-dimethylallyltransferase 2, chloroplastic (407 aa).

A chloroplast-targeting transit peptide spans 1-23 (MGFVLPASFPGASSITTGGSCLR). A run of 8 helical transmembrane segments spans residues 117–137 (FCRPYAIFSVVLGATFKSLVA), 145–165 (SLAFFIGWLQVVVAVICIHIF), 206–226 (ILGLGFAWIVGSWPLFWTVFI), 248–268 (VLTAISFIANVAVTRSLGFFL), 285–305 (LIFCTAIVSIYAIVIALFKDI), 328–348 (VFWICVSLLEMAYGVTILVGA), 352–372 (ILWSKIITVLGHAILASVLWY), and 383–403 (VVLQSFYMFIWKLHTAEYCLI).

It belongs to the UbiA prenyltransferase family. Requires Mg(2+) as cofactor. It depends on Mn(2+) as a cofactor.

The protein resides in the plastid. The protein localises to the chloroplast membrane. It carries out the reaction (2S)-naringenin + dimethylallyl diphosphate = sophoraflavanone B + diphosphate. Involved in the biosynthesis of sophoraflavanone G (SFG). Can use flavanones (naringenin, liquiritigenin and hesperetin) as substrates, but not flavonols or isoflavones. Shows a strict specificity for dimethylallyl diphosphate. The chain is Naringenin 8-dimethylallyltransferase 2, chloroplastic (N8DT-2) from Sophora flavescens (Shrubby sophora).